The chain runs to 344 residues: 2-methyl-6-phytyl-1,4-hydroquinone methyltransferase, chloroplastic (344 aa).

The transit peptide at 1-62 directs the protein to the chloroplast; it reads MACSMLNGVD…LTTVTKCTLS (62 aa). Residues 63–313 lie on the Chloroplast intermembrane side of the membrane; the sequence is ASERPASQPR…PVHPLVFLYR (251 aa). Residues 121-130 are SAM motif I; sequence VVDVGGGTGF. The segment at 166–179 is SAM motif II; the sequence is CRIIEGDAEDLPFP. The SAM motif III stretch occupies residues 207-220; sequence RVLKLGGKACLIGP. Residues 314-334 form a helical membrane-spanning segment; that stretch reads FLLGALASTYYVLVPIYMWIK. Residues 335-344 lie on the Stromal side of the membrane; that stretch reads DKIFPKGMPL.

Belongs to the class I-like SAM-binding methyltransferase superfamily. MPBQ/MBSQ MT family.

The protein resides in the plastid. It is found in the chloroplast inner membrane. The enzyme catalyses 2-methyl-6-phytyl-1,4-benzene-1,4-diol + S-adenosyl-L-methionine = 2,3-dimethyl-6-phytylbenzene-1,4-diol + S-adenosyl-L-homocysteine + H(+). It catalyses the reaction 2-methyl-6-(all-trans-nonaprenyl)benzene-1,4-diol + S-adenosyl-L-methionine = plastoquinol-9 + S-adenosyl-L-homocysteine + H(+). It carries out the reaction 6-geranylgeranyl-2-methylbenzene-1,4-diol + S-adenosyl-L-methionine = 6-geranylgeranyl-2,3-dimethylbenzene-1,4-diol + S-adenosyl-L-homocysteine + H(+). Its pathway is cofactor biosynthesis; tocopherol biosynthesis. Functionally, involved in a key methylation step in both tocopherols (vitamin E) and plastoquinone synthesis. Catalyzes the conversion of 2-methyl-6-phytyl-1,4-hydroquinone (MPBQ) to 2,3-dimethyl-6-phytyl-1,4-hydroquinone (DMPQ, a substrate for tocopherol cyclase), and 2-methyl-6-solanyl-1,4-benzoquinone (MSBQ) to plastoquinone. This chain is 2-methyl-6-phytyl-1,4-hydroquinone methyltransferase, chloroplastic, found in Spinacia oleracea (Spinach).